A 229-amino-acid chain; its full sequence is Glycine betaine/carnitine/choline transport system permease protein OpuCD (229 aa).

The region spanning 22-202 (FYRHFLMSVY…LMAVIADLVM (181 aa)) is the ABC transmembrane type-1 domain. Helical transmembrane passes span 27 to 47 (LMSV…GILI), 55 to 74 (GWVF…AMLA), 78 to 100 (LVMG…LPII), 148 to 168 (ALVI…GGLG), and 182 to 202 (AIIL…DLVM).

It belongs to the binding-protein-dependent transport system permease family. CysTW subfamily. The complex is composed of two ATP-binding proteins (OpuCA), two transmembrane proteins (OpuCB and OpuCD) and a solute-binding protein (OpuCC).

The protein resides in the cell membrane. Functionally, involved in a high affinity multicomponent binding-protein-dependent transport system for glycine betaine, carnitine and choline; probably responsible for the translocation of the substrate across the membrane. The polypeptide is Glycine betaine/carnitine/choline transport system permease protein OpuCD (opuCD) (Bacillus subtilis (strain 168)).